The sequence spans 39 residues: Potassium channel toxin alpha-KTx 2.17 (39 aa).

Disulfide bonds link Cys7–Cys29, Cys13–Cys34, and Cys17–Cys36. Ile39 carries the post-translational modification Isoleucine amide.

This sequence belongs to the short scorpion toxin superfamily. Potassium channel inhibitor family. Alpha-KTx 02 subfamily. As to expression, expressed by the venom gland.

Its subcellular location is the secreted. Blocks human voltage-gated potassium channels Kv1.1/KCNA1 (IC(50)=4.8 nM) and Kv1.2/KCNA2 (IC(50)=2.9 nM). This is Potassium channel toxin alpha-KTx 2.17 from Centruroides tecomanus (Scorpion).